A 356-amino-acid polypeptide reads, in one-letter code: Putative [LysW]-L-2-aminoadipate/[LysW]-L-glutamate phosphate reductase (356 aa).

NADP(+) is bound at residue 11–14 (SGYT). Residue Cys-157 is part of the active site. Residue Asn-323 participates in NADP(+) binding.

It belongs to the NAGSA dehydrogenase family. Type 1 subfamily. LysY sub-subfamily.

It is found in the cytoplasm. It catalyses the reaction [amino-group carrier protein]-C-terminal-N-(1-carboxy-5-oxopentan-1-yl)-L-glutamine + phosphate + NADP(+) = [amino-group carrier protein]-C-terminal-N-(1-carboxy-5-phosphooxy-5-oxopentan-1-yl)-L-glutamine + NADPH + H(+). The enzyme catalyses [amino-group carrier protein]-C-terminal-gamma-(L-glutamyl-5-semialdehyde)-L-glutamate + phosphate + NADP(+) = [amino-group carrier protein]-C-terminal-gamma-(5-phospho-L-glutamyl)-L-glutamate + NADPH + H(+). Its pathway is amino-acid biosynthesis; L-lysine biosynthesis via AAA pathway; L-lysine from L-alpha-aminoadipate (Thermus route): step 3/5. It functions in the pathway amino-acid biosynthesis; L-arginine biosynthesis. Involved in both the arginine and lysine biosynthetic pathways. The polypeptide is Putative [LysW]-L-2-aminoadipate/[LysW]-L-glutamate phosphate reductase (Ignicoccus hospitalis (strain KIN4/I / DSM 18386 / JCM 14125)).